The following is a 598-amino-acid chain: Aspartate--tRNA ligase (598 aa).

Glu-173 is an L-aspartate binding site. The aspartate stretch occupies residues 197–200 (QLFK). An L-aspartate-binding site is contributed by Arg-219. ATP is bound by residues 219–221 (RDE) and Gln-228. His-449 is an L-aspartate binding site. Glu-483 contributes to the ATP binding site. Arg-490 contributes to the L-aspartate binding site. Residue 535–538 (GLDR) coordinates ATP.

This sequence belongs to the class-II aminoacyl-tRNA synthetase family. Type 1 subfamily. In terms of assembly, homodimer.

It localises to the cytoplasm. It catalyses the reaction tRNA(Asp) + L-aspartate + ATP = L-aspartyl-tRNA(Asp) + AMP + diphosphate. Its function is as follows. Catalyzes the attachment of L-aspartate to tRNA(Asp) in a two-step reaction: L-aspartate is first activated by ATP to form Asp-AMP and then transferred to the acceptor end of tRNA(Asp). The polypeptide is Aspartate--tRNA ligase (Shewanella halifaxensis (strain HAW-EB4)).